Consider the following 235-residue polypeptide: Large ribosomal subunit protein uL1 (235 aa).

This sequence belongs to the universal ribosomal protein uL1 family. Part of the 50S ribosomal subunit.

Binds directly to 23S rRNA. The L1 stalk is quite mobile in the ribosome, and is involved in E site tRNA release. Its function is as follows. Protein L1 is also a translational repressor protein, it controls the translation of the L11 operon by binding to its mRNA. The polypeptide is Large ribosomal subunit protein uL1 (Mycobacterium leprae (strain Br4923)).